The sequence spans 95 residues: Neurexophilin-3 (95 aa).

N-linked (GlcNAc...) asparagine glycosylation is found at Asn-1 and Asn-7. The tract at residues 1–21 is III; that stretch reads NATGQGNISISLVPPSKAVEX. The tract at residues 22–30 is IV (linker domain); it reads HQXQQIFIE. Positions 31 to 95 are v (Cys-rich); sequence AKASKIFNCR…YIAFYSTDYR (65 aa).

The protein belongs to the neurexophilin family.

The protein localises to the secreted. May be signaling molecules that resemble neuropeptides. Ligand for alpha-neurexins. This chain is Neurexophilin-3 (NXPH3), found in Macaca mulatta (Rhesus macaque).